A 763-amino-acid polypeptide reads, in one-letter code: Phosphoglycerol transferase I (763 aa).

The next 4 helical transmembrane spans lie at Met-1–Ala-21, Trp-26–Phe-46, Ile-77–Ile-97, and Phe-108–Phe-128.

This sequence belongs to the OpgB family.

It is found in the cell inner membrane. It carries out the reaction a phosphatidylglycerol + a membrane-derived-oligosaccharide D-glucose = a 1,2-diacyl-sn-glycerol + a membrane-derived-oligosaccharide 6-(glycerophospho)-D-glucose.. The protein operates within glycan metabolism; osmoregulated periplasmic glucan (OPG) biosynthesis. Functionally, transfers a phosphoglycerol residue from phosphatidylglycerol to the membrane-bound nascent glucan backbones. The sequence is that of Phosphoglycerol transferase I from Escherichia coli (strain SE11).